Consider the following 277-residue polypeptide: Bifunctional protein FolD (277 aa).

NADP(+) contacts are provided by residues 160–162 (GAS), S185, and I226.

The protein belongs to the tetrahydrofolate dehydrogenase/cyclohydrolase family. As to quaternary structure, homodimer.

It carries out the reaction (6R)-5,10-methylene-5,6,7,8-tetrahydrofolate + NADP(+) = (6R)-5,10-methenyltetrahydrofolate + NADPH. The enzyme catalyses (6R)-5,10-methenyltetrahydrofolate + H2O = (6R)-10-formyltetrahydrofolate + H(+). The protein operates within one-carbon metabolism; tetrahydrofolate interconversion. Catalyzes the oxidation of 5,10-methylenetetrahydrofolate to 5,10-methenyltetrahydrofolate and then the hydrolysis of 5,10-methenyltetrahydrofolate to 10-formyltetrahydrofolate. In Vesicomyosocius okutanii subsp. Calyptogena okutanii (strain HA), this protein is Bifunctional protein FolD.